A 353-amino-acid polypeptide reads, in one-letter code: Protein Wnt-11b (353 aa).

Residues 1-22 (MAPTRHWVTPLLLLCCSGICGA) form the signal peptide. Residues asparagine 31, asparagine 38, and asparagine 88 are each glycosylated (N-linked (GlcNAc...) asparagine). Cystine bridges form between cysteine 78–cysteine 89, cysteine 128–cysteine 136, cysteine 138–cysteine 155, cysteine 208–cysteine 222, and cysteine 210–cysteine 217. Residue serine 214 is the site of O-palmitoleoyl serine; by PORCN attachment. Sulfotyrosine occurs at positions 274 and 281. Disulfide bonds link cysteine 282-cysteine 313, cysteine 298-cysteine 308, cysteine 312-cysteine 352, cysteine 328-cysteine 343, cysteine 330-cysteine 340, and cysteine 335-cysteine 336. The N-linked (GlcNAc...) asparagine glycan is linked to asparagine 299.

This sequence belongs to the Wnt family. In terms of assembly, homodimer. Secreted homodimers form a complex with wnt5a homodimers; tyrosine sulfation of both wnt11 and wnt5a by tpst1 is required for this interaction. Interacts with the transmembrane receptor fzd7/fz7. Interacts with lrp6 and ryk. Interacts with tdgf1/frl1. Interacts weakly with frzb1 and strongly with frzb2/crescent. Interaction with frzb2/crescent antagonizes wnt11 function in the neuroectoderm, but enhances it in mesodermal tissue. In terms of processing, glycosylation is required for protein secretion. Palmitoleoylation is required for efficient binding to frizzled receptors. Depalmitoleoylation leads to Wnt signaling pathway inhibition. Transcripts are expressed ubiquitously in early oocytes but become vegetally localized during mid-oogenesis then enriched on the dorsal side by the 8 to 16 cell stage. The protein becomes asymmetrically concentrated on the dorsal side by the 64-cell stage. During gastrulation, expressed in the lateral and ventral marginal zone, and during tadpole stages in the somites and first branchial arch. Weakly expressed in the pronephros from at least stage 12.5, with kidney expression increasing until stage 35. Expressed in the prospective posterior gut between stages 13 and 20, and in the deep foregut endoderm. Prior to neural crest cell migration, expressed in a domain flanking the neural crest on the lateral or epidermal side (the opposite side to wnt11/wnt11-r).

The protein resides in the secreted. The protein localises to the extracellular space. It is found in the extracellular matrix. Its function is as follows. Ligand for the frizzled7 transmembrane receptor. Primarily acts via non-canonical Wnt pathways mediated by either Ca(2+) and PKC, or by JNK and dvl2/dsh. Depending on the cellular context, can also signal via the canonical Wnt pathway mediated by beta-catenin and dvl2/dsh. May also inhibit canonical Wnt signaling. Maternally initiates dorsal/ventral axis formation by a canonical route, which signals via lrp6. In a complex with wnt5a, activates the canonical and non-canonical processes involved in axis formation. In the non-canonical pathway, acts through fzd7/fz7 to induce phosphorylation of dvl2/dsh. Signals through a non-canonical Wnt pathway to regulate convergent extension movements during gastrulation. Interactions with the secreted Wnt antagonist sfrp5 to coordinate foregut development, acting via a non-canonical Wnt pathway whereby sfrp5 restricts wnt11b activity to prevent inappropriate foregut formation. Mediates cardiogenesis via non-canonical Wnt signaling involving JNK-activation and PKC. Acts redundantly with wnt11/wnt11r during pronephros induction. This chain is Protein Wnt-11b (wnt11b), found in Xenopus laevis (African clawed frog).